The chain runs to 105 residues: UPF0148 protein PYRAB12700 (105 aa).

Belongs to the UPF0148 family.

The polypeptide is UPF0148 protein PYRAB12700 (Pyrococcus abyssi (strain GE5 / Orsay)).